The following is a 163-amino-acid chain: Fatty acid-binding protein homolog (163 aa).

Residues 1-23 form the signal peptide; that stretch reads MRCLVALILTVLIVTPEVEAKTL.

This sequence belongs to the calycin superfamily. Fatty-acid binding protein (FABP) family. As to expression, abundant in the fluid surrounding the developing embryo of Ascaris suum.

In terms of biological role, may play a role in sequestering potentially toxic fatty acids and their peroxidation products, or it may be involved in the maintenance of the impermeable lipid layer of the eggshell. The polypeptide is Fatty acid-binding protein homolog (Ascaris suum (Pig roundworm)).